A 143-amino-acid chain; its full sequence is Ribosome-binding factor A (143 aa).

The disordered stretch occupies residues 119–143; the sequence is KAKQQQFTPDTPDNSESVDGEKEQD. Over residues 122–133 the composition is skewed to polar residues; the sequence is QQQFTPDTPDNS.

It belongs to the RbfA family. In terms of assembly, monomer. Binds 30S ribosomal subunits, but not 50S ribosomal subunits or 70S ribosomes.

It localises to the cytoplasm. In terms of biological role, one of several proteins that assist in the late maturation steps of the functional core of the 30S ribosomal subunit. Associates with free 30S ribosomal subunits (but not with 30S subunits that are part of 70S ribosomes or polysomes). Required for efficient processing of 16S rRNA. May interact with the 5'-terminal helix region of 16S rRNA. The polypeptide is Ribosome-binding factor A (Shewanella frigidimarina (strain NCIMB 400)).